The primary structure comprises 130 residues: Small ribosomal subunit protein uS11 (130 aa).

The protein belongs to the universal ribosomal protein uS11 family. As to quaternary structure, part of the 30S ribosomal subunit. Interacts with proteins S7 and S18. Binds to IF-3.

Located on the platform of the 30S subunit, it bridges several disparate RNA helices of the 16S rRNA. Forms part of the Shine-Dalgarno cleft in the 70S ribosome. This is Small ribosomal subunit protein uS11 from Pseudoalteromonas atlantica (strain T6c / ATCC BAA-1087).